A 566-amino-acid polypeptide reads, in one-letter code: 3-oxosteroid 1-dehydrogenase (566 aa).

10–39 (DVVVVGSGAAGMVAALVAAHRGLSTVVVEK) serves as a coordination point for FAD.

This sequence belongs to the FAD-dependent oxidoreductase 2 family. 3-oxosteroid dehydrogenase subfamily. It depends on FAD as a cofactor.

The enzyme catalyses a 3-oxosteroid + A = a 3-oxo-Delta(1)-steroid + AH2. It catalyses the reaction a 3-oxo-Delta(4)-steroid + A = a 3-oxo-Delta(1,4)-steroid + AH2. Functionally, involved in the degradation of cholesterol. Catalyzes the elimination of the C-1 and C-2 hydrogen atoms of the A-ring from the polycyclic ring structure of 3-ketosteroids. Is also involved in the formation of 3-keto-1,4-diene-steroid from 3-keto-4-ene-steroid. This chain is 3-oxosteroid 1-dehydrogenase (kstD), found in Mycobacterium tuberculosis (strain CDC 1551 / Oshkosh).